Consider the following 165-residue polypeptide: Dihydrofolate reductase (165 aa).

The region spanning 3–165 (VVGLIWAQST…RYRLHSYHRS (163 aa)) is the DHFR domain. 7 to 9 (IWA) is a binding site for substrate. NADP(+)-binding positions include 8–9 (WA) and 16–21 (IGRDGG). Asp29 contacts substrate. 45–48 (GRRT) is an NADP(+) binding site. Residue Arg62 participates in substrate binding. NADP(+) contacts are provided by residues 67-70 (LSRQ) and 100-105 (IGGEQI). Thr119 lines the substrate pocket.

It belongs to the dihydrofolate reductase family.

It catalyses the reaction (6S)-5,6,7,8-tetrahydrofolate + NADP(+) = 7,8-dihydrofolate + NADPH + H(+). The protein operates within cofactor biosynthesis; tetrahydrofolate biosynthesis; 5,6,7,8-tetrahydrofolate from 7,8-dihydrofolate: step 1/1. Its function is as follows. Key enzyme in folate metabolism. Catalyzes an essential reaction for de novo glycine and purine synthesis, and for DNA precursor synthesis. The chain is Dihydrofolate reductase (folA) from Mycobacterium leprae (strain TN).